A 1824-amino-acid chain; its full sequence is MASQNVVFAIDVDYRPEGTQNTTNAYQDHLKQWILRVLLSLGHRYGLEKVRWGYKFFNSRTVKSATLITRGSDFKELQEKVFSDFEEELHVKFTTEGKSPRSQEKSHKLKPSPACCVQNALKEILLDFQWDRPDLTSPTKVTLRPRRSSRSGRNIPLQDCDMLSVDKNVLFVVSECPRSKAELEDYLSMRREDSRHHKDINEQMLPKGLIDMLMQRNVVLHWADSGVFKADHVAKDYTGIETLMERLGLVGGQVVPMLSPCLPLMDQHPKMNSLLALGVDAFPIDSTNSYLHLSKRMQQQLFPPLGASFSWIADGTKRSCNVTLEPVSYRQRSLRAPVDVLLKGVLQSLDILSLSHSAIETWILQCPDAELGQEAFQHLKQLSTGGHAMLAEVSEGDVVCSAVLSVLSSCTAQITVLQPLLAQEGQLLPADLVSLDTTDISGDLPDVVSSVLSVMYDIMEEDDCSDHEKMPLVPDWANQELKQQSSSRSNGMVEGWFPLSDQSGISCHLMESMRLLHAAPEEKEKGEEYSDTQQEITSSLSEFYQSSTAGSSGSLRSKKRGTQCTPVRQKMKTMSRSLQMLNFARLNVKAQKTQGDSGSAGSGKGTEKGGKKSSGDRTKPGLLHFSSEEELLSHLGLTYQKAVENRTMSVPSQVQDLLSVVKSFLKSNTEASLLNLVQKHVLKSCQSIRQHYGNSSDDESKIRECQLQAVLRLELCKQTEQEDEEVVEQRVEDVADMLRNISRSKDAVYLSRFMQEEVLPLYMNSIPKVLADVYHSLGTQLPEALVAVLPSDFFSDESLAKDSVSVSLSSFSATQSNISSVGDHLEELRNRSAKKRRQSMITRHKSMTEAPQALRQIEMPRKSTRLAKPKLCVPIEKTAVEQPPLPKQPVQEVTKVRRNLFNQVTVSPSKKSKMPRSQSVSAVEGIKKRKRSDVDNDDRHTLLTKKVSETPLHKQVSSRLLHRQRTGRKSGESDVCIIEESPIKPAADLRRSPRIKSLTRRHSSVFYSSSQPRSRNLDRVVSSSQLSHSEGKGKFSVSSVRSPVRLLFGATQSPGRLRHTTVSSLEDQASKGLPLRCSSFENQNKTPQKLRSDALASAVGCRTPQSPRTPNRTVGDNGMALRGSPFQSPAAKSIVVETPMKSPLKGILKTPIKKSLLDCVSPNGAWLRSPGCKTPKKCVTWSPSPRKPVPENQVNVPDSPVFAKRHSPRLVTPGKNSSPEEKIVFKTPDKVPQRKSKTSPEIILRRLEIPVNIDPETCKSITRSGKIRTLSLPYKTSKGSDEFLPQSESGSFPFCNSPLKPNIQKTIQSPIPTHRMCTRSGNTPVKESCSPSSNSQGITGTSPSPRKSLSSAVAKSSPSPSFGPSRSGVGNQNNSSISNVEKHTDDDKIIVQNKANDEKAEEASSSDSQQFDCSEFSITTDDESIDISEAAVVKTQLVGGIKMNIAFSRKPSKSDVFEFEGKQTTSTGTPLTRSYGFRQTPDRRQREAEARLGYSSGKPKISTPRTRRTPACGKQSSPQPLTYEVEMEMQASGLPKLKLRRTDSFNAGDLPSSATKGMTSHLVHRNKTNLKAPQIDSPLVQSSRHPGCISPSLCSRATPAKGTPGKGVQTYICQSITPTHHPTSSQSPLASPLTPSPQSRGWPTPENLNSWPRKKRARIETCGNKEQVIKGVPLLEKTGVIEDPELEGIFRIQGVEELKESLSTPISQRKLGLRSSQVMDHQGSPEGMDWTETMAQMCDAKDSTKTEQFAWMGRKVDTPKVKKQVSASGIFALTQSPLLYKKSAVIKEATQFSGSKSELEISPLCQPRRRRTPSRTYSRKKLLD.

Disordered stretches follow at residues 542 to 572 (EFYQSSTAGSSGSLRSKKRGTQCTPVRQKMK), 590 to 622 (AQKTQGDSGSAGSGKGTEKGGKKSSGDRTKPGL), 907 to 973 (SPSK…SGES), 1001 to 1035 (RHSSVFYSSSQPRSRNLDRVVSSSQLSHSEGKGKF), 1098 to 1117 (AVGCRTPQSPRTPNRTVGDN), 1189 to 1221 (VPENQVNVPDSPVFAKRHSPRLVTPGKNSSPEE), 1293 to 1388 (PFCN…DDDK), 1459 to 1518 (FEGK…QSSP), 1617 to 1650 (TPTHHPTSSQSPLASPLTPSPQSRGWPTPENLNS), and 1803 to 1824 (PLCQPRRRRTPSRTYSRKKLLD). The span at 546–555 (SSTAGSSGSL) shows a compositional bias: low complexity. The span at 562-572 (TQCTPVRQKMK) shows a compositional bias: polar residues. Basic and acidic residues predominate over residues 605–619 (GTEKGGKKSSGDRTK). Over residues 907-921 (SPSKKSKMPRSQSVS) the composition is skewed to polar residues. A compositionally biased stretch (basic and acidic residues) spans 932–952 (SDVDNDDRHTLLTKKVSETPL). Polar residues-rich tracts occupy residues 1005-1014 (VFYSSSQPRS) and 1103-1114 (TPQSPRTPNRTV). Over residues 1319-1345 (RSGNTPVKESCSPSSNSQGITGTSPSP) the composition is skewed to polar residues. A compositionally biased stretch (low complexity) spans 1347–1370 (KSLSSAVAKSSPSPSFGPSRSGVG). The span at 1462–1472 (KQTTSTGTPLT) shows a compositional bias: polar residues. Positions 1480–1490 (TPDRRQREAEA) are enriched in basic and acidic residues. Composition is skewed to polar residues over residues 1617 to 1629 (TPTHHPTSSQSPL) and 1636 to 1650 (SPQSRGWPTPENLNS). The span at 1807–1824 (PRRRRTPSRTYSRKKLLD) shows a compositional bias: basic residues.

This sequence belongs to the treslin family. In terms of assembly, interacts with topbp1 (via BRCT domains); interaction takes place in a cdk2-dependent manner. Component of the replisome complex.

It is found in the nucleus. Functionally, regulator of DNA replication and S/M and G2/M checkpoints. Regulates the triggering of DNA replication initiation via its interaction with topbp1 by participating in cdk2-mediated loading of cdc45l onto replication origins. Required for the transition from pre-replication complex (pre-RC) to pre-initiation complex (pre-IC). Required to prevent mitotic entry after treatment with ionizing radiation. The protein is Treslin (ticrr) of Danio rerio (Zebrafish).